We begin with the raw amino-acid sequence, 119 residues long: Holo-[acyl-carrier-protein] synthase (119 aa).

Mg(2+) is bound by residues aspartate 7 and glutamate 56.

It belongs to the P-Pant transferase superfamily. AcpS family. Requires Mg(2+) as cofactor.

Its subcellular location is the cytoplasm. It carries out the reaction apo-[ACP] + CoA = holo-[ACP] + adenosine 3',5'-bisphosphate + H(+). Transfers the 4'-phosphopantetheine moiety from coenzyme A to a Ser of acyl-carrier-protein. The sequence is that of Holo-[acyl-carrier-protein] synthase from Chlamydia trachomatis serovar L2 (strain ATCC VR-902B / DSM 19102 / 434/Bu).